Here is a 230-residue protein sequence, read N- to C-terminus: Iron-dependent repressor IdeR (230 aa).

One can recognise an HTH dtxR-type domain in the interval 4–65 (LVDTTEMYLR…VAGDRHLELT (62 aa)).

The protein belongs to the DtxR/MntR family. As to quaternary structure, homodimer.

The protein localises to the cytoplasm. Metal-dependent DNA-binding protein that controls transcription of many genes involved in iron metabolism. The protein is Iron-dependent repressor IdeR (ideR) of Mycobacterium bovis (strain ATCC BAA-935 / AF2122/97).